The chain runs to 302 residues: Protein FdhE homolog (302 aa).

It belongs to the FdhE family.

Its subcellular location is the cytoplasm. Its function is as follows. Necessary for formate dehydrogenase activity. The chain is Protein FdhE homolog from Haemophilus influenzae (strain PittGG).